Consider the following 590-residue polypeptide: G protein-coupled receptor kinase 5 (590 aa).

An N-terminal region spans residues methionine 1 to threonine 185. The interaction with calmodulin stretch occupies residues glycine 20 to isoleucine 39. One can recognise an RGS domain in the interval tyrosine 53–leucine 171. Serine 136 carries the phosphoserine modification. A Protein kinase domain is found at phenylalanine 186–phenylalanine 448. ATP is bound by residues leucine 192–valine 200 and lysine 215. Catalysis depends on aspartate 311, which acts as the Proton acceptor. The Nuclear localization signal motif lies at arginine 388 to glutamate 395. Residues arginine 449–glutamate 514 form the AGC-kinase C-terminal domain. Serine 484 is subject to Phosphoserine; by autocatalysis. A Phosphothreonine; by autocatalysis modification is found at threonine 485. The sufficient for membrane localization stretch occupies residues proline 546–serine 565. Residues arginine 557–serine 590 form a disordered region. Low complexity predominate over residues serine 561–serine 590. Serine 579 is subject to Phosphoserine.

Belongs to the protein kinase superfamily. AGC Ser/Thr protein kinase family. GPRK subfamily. As to quaternary structure, interacts with ST13 (via the C-terminus 303-319 AA). Interacts with TP53/p53. Interacts with HTR4 (via C-terminus 330-346 AA); this interaction is promoted by 5-HT (serotonin). Interacts with HDAC5. Interacts with GIT1. Autophosphorylated. Autophosphorylation may play a critical role in the regulation of GRK5 kinase activity.

It is found in the cytoplasm. Its subcellular location is the nucleus. The protein resides in the cell membrane. It catalyses the reaction [G-protein-coupled receptor] + ATP = [G-protein-coupled receptor]-phosphate + ADP + H(+). With respect to regulation, inhibited by calmodulin with an IC(50) of 50 nM. Calmodulin inhibits GRK5 association with receptor and phospholipid. In terms of biological role, serine/threonine kinase that phosphorylates preferentially the activated forms of a variety of G-protein-coupled receptors (GPCRs). Such receptor phosphorylation initiates beta-arrestin-mediated receptor desensitization, internalization, and signaling events leading to their down-regulation. Phosphorylates a variety of GPCRs, including adrenergic receptors, muscarinic acetylcholine receptors (more specifically Gi-coupled M2/M4 subtypes), dopamine receptors and opioid receptors. In addition to GPCRs, also phosphorylates various substrates: Hsc70-interacting protein/ST13, TP53/p53, HDAC5, and arrestin-1/ARRB1. Phosphorylation of ARRB1 by GRK5 inhibits G-protein independent MAPK1/MAPK3 signaling downstream of 5HT4-receptors. Phosphorylation of HDAC5, a repressor of myocyte enhancer factor 2 (MEF2) leading to nuclear export of HDAC5 and allowing MEF2-mediated transcription. Phosphorylation of TP53/p53, a crucial tumor suppressor, inhibits TP53/p53-mediated apoptosis. Phosphorylation of ST13 regulates internalization of the chemokine receptor. Phosphorylates rhodopsin (RHO) (in vitro) and a non G-protein-coupled receptor, LRP6 during Wnt signaling (in vitro). The chain is G protein-coupled receptor kinase 5 (Grk5) from Mus musculus (Mouse).